A 56-amino-acid chain; its full sequence is Large ribosomal subunit protein bL33C (56 aa).

Belongs to the bacterial ribosomal protein bL33 family.

This Sorangium cellulosum (strain So ce56) (Polyangium cellulosum (strain So ce56)) protein is Large ribosomal subunit protein bL33C.